The primary structure comprises 831 residues: Probable basic-leucine zipper transcription factor P (831 aa).

2 disordered regions span residues Met-1–Ile-33 and Asn-54–Arg-166. Over residues Asn-54–Lys-85 the composition is skewed to low complexity. Residues Asn-87–Asn-96 show a composition bias toward basic and acidic residues. Residues Lys-97–Gln-129 show a composition bias toward low complexity. Residues Asn-101–Gly-141 are a coiled coil. Acidic residues predominate over residues Tyr-130–Asp-143. Residues Asp-144 to Met-154 are compositionally biased toward basic and acidic residues. Residues Gly-151–Val-214 enclose the bZIP domain. The segment at Lys-153–Lys-173 is basic motif. The interval Ile-176–Ile-183 is leucine-zipper. Low complexity-rich tracts occupy residues Ser-469–Ser-484 and Ser-497–Ser-510. Disordered regions lie at residues Ser-469 to Ser-510, Gln-658 to Tyr-697, Asp-715 to Lys-771, and Ser-787 to Ser-810. Residues Ala-601–Gln-664 are a coiled coil. Composition is skewed to low complexity over residues Pro-674–Gln-695, Asn-720–Asn-750, and Ser-787–Ser-800.

It belongs to the bZIP family.

Its subcellular location is the nucleus. Functionally, probable transcriptional regulator. The polypeptide is Probable basic-leucine zipper transcription factor P (bzpP) (Dictyostelium discoideum (Social amoeba)).